The primary structure comprises 229 residues: Prolactin (229 aa).

A signal peptide spans 1-30 (MDSKGSAQKGSRLLLLLVVSNLLLCQGVVS). C34 and C41 are disulfide-bonded. 3 positions are modified to phosphoserine: S56, S64, and S120. Disulfide bonds link C88–C204 and C221–C229.

The protein belongs to the somatotropin/prolactin family. In terms of assembly, interacts with PRLR.

It is found in the secreted. Functionally, prolactin acts primarily on the mammary gland by promoting lactation. The polypeptide is Prolactin (PRL) (Capra hircus (Goat)).